Here is a 424-residue protein sequence, read N- to C-terminus: 5-methylthioadenosine/S-adenosylhomocysteine deaminase (424 aa).

Zn(2+) contacts are provided by His60 and His62. Glu89 and His181 together coordinate substrate. Residue His208 participates in Zn(2+) binding. Positions 211 and 296 each coordinate substrate. Zn(2+) is bound at residue Asp296.

This sequence belongs to the metallo-dependent hydrolases superfamily. MTA/SAH deaminase family. Requires Zn(2+) as cofactor.

It catalyses the reaction S-adenosyl-L-homocysteine + H2O + H(+) = S-inosyl-L-homocysteine + NH4(+). The catalysed reaction is S-methyl-5'-thioadenosine + H2O + H(+) = S-methyl-5'-thioinosine + NH4(+). Functionally, catalyzes the deamination of 5-methylthioadenosine and S-adenosyl-L-homocysteine into 5-methylthioinosine and S-inosyl-L-homocysteine, respectively. Is also able to deaminate adenosine. This is 5-methylthioadenosine/S-adenosylhomocysteine deaminase from Thermococcus kodakarensis (strain ATCC BAA-918 / JCM 12380 / KOD1) (Pyrococcus kodakaraensis (strain KOD1)).